Here is a 1027-residue protein sequence, read N- to C-terminus: D-2-hydroxyglutarate dehydrogenase (1027 aa).

The 237-residue stretch at 48–284 (YQQLPQAILF…CEAKLNLLLI (237 aa)) folds into the FAD-binding PCMH-type domain. Positions 405 and 503 each coordinate (R)-2-hydroxyglutarate. Residues 665 to 696 (HEVKAAMDTCLACKACASQCPIKIDVPSFRAK) enclose the 4Fe-4S ferredoxin-type domain. Residues cysteine 674, cysteine 677, cysteine 680, and cysteine 684 each coordinate [4Fe-4S] cluster.

It in the N-terminal section; belongs to the FAD-binding oxidoreductase/transferase type 4 family. As to quaternary structure, homotetramer. Requires [4Fe-4S] cluster as cofactor. FAD is required as a cofactor.

The enzyme catalyses (R)-2-hydroxyglutarate + A = 2-oxoglutarate + AH2. Functionally, catalyzes the oxidation of D-2-hydroxyglutarate (D-2-HGA) to 2-oxoglutarate. Provides the way to recycle D-2-HGA produced during L-serine synthesis by SerA, by converting it back to 2-oxoglutarate. The physiological molecule that functions as the primary electron acceptor during D-2-HGA oxidation is unknown. This Haemophilus influenzae (strain ATCC 51907 / DSM 11121 / KW20 / Rd) protein is D-2-hydroxyglutarate dehydrogenase.